A 362-amino-acid polypeptide reads, in one-letter code: Lipoprotein p35 (362 aa).

A signal peptide spans 1 to 30 (MKIKKIKLLKALALTGAFGIVATVPVIVSS). A lipid anchor (N-palmitoyl cysteine) is attached at C31. Residue C31 is the site of S-diacylglycerol cysteine attachment. A disordered region spans residues 33–53 (STSENNGNGNGNGGTDGNTQQ).

Belongs to the p35 lipoprotein family. The N-terminus is blocked.

The protein resides in the cell membrane. Functionally, major M.penetrans antigen. The protein is Lipoprotein p35 of Malacoplasma penetrans (strain HF-2) (Mycoplasma penetrans).